The chain runs to 129 residues: Cytochrome c oxidase subunit 13, mitochondrial (129 aa).

The N-terminal 9 residues, 1 to 9, are a transit peptide targeting the mitochondrion; that stretch reads MFRQCAKRY. Topologically, residues 10 to 43 are mitochondrial matrix; sequence ASSLPPNALKPAFGPPDKVAAQKFKESLMATEKH. A helical transmembrane segment spans residues 44-71; sequence AKDTSNMWVKISVWVALPAIALTAVNTY. Topologically, residues 72–129 are mitochondrial intermembrane; it reads FVEKEHAEHREHLKHVPDSEWPRDYEFMNIRSKPFFWGDGDKTLFWNPVVNRHIEHDD.

This sequence belongs to the cytochrome c oxidase subunit 6A family. Component of the cytochrome c oxidase (complex IV, CIV), a multisubunit enzyme composed of 12 subunits. The complex is composed of a catalytic core of 3 subunits COX1, COX2 and COX3, encoded in the mitochondrial DNA, and 9 supernumerary subunits COX4, COX5A (or COX5B), COX6, COX7, COX8, COX9, COX12, COX13 and COX26, which are encoded in the nuclear genome. The complex exists as a monomer or a dimer and forms supercomplexes (SCs) in the inner mitochondrial membrane with a dimer of ubiquinol-cytochrome c oxidoreductase (cytochrome b-c1 complex, complex III, CIII), resulting in 2 different assemblies (supercomplexes III(2)IV and III(2)IV(2)). COX13 interacts with COX1 and COX3 on the intermembrane space (IMS) and COX4 on the matrix side.

The protein localises to the mitochondrion inner membrane. It functions in the pathway energy metabolism; oxidative phosphorylation. Functionally, component of the cytochrome c oxidase, the last enzyme in the mitochondrial electron transport chain which drives oxidative phosphorylation. The respiratory chain contains 3 multisubunit complexes succinate dehydrogenase (complex II, CII), ubiquinol-cytochrome c oxidoreductase (cytochrome b-c1 complex, complex III, CIII) and cytochrome c oxidase (complex IV, CIV), that cooperate to transfer electrons derived from NADH and succinate to molecular oxygen, creating an electrochemical gradient over the inner membrane that drives transmembrane transport and the ATP synthase. Cytochrome c oxidase is the component of the respiratory chain that catalyzes the reduction of oxygen to water. Electrons originating from reduced cytochrome c in the intermembrane space (IMS) are transferred via the dinuclear copper A center (CU(A)) of COX2 and heme A of COX1 to the active site in COX1, a binuclear center (BNC) formed by heme A3 and copper B (CU(B)). The BNC reduces molecular oxygen to 2 water molecules using 4 electrons from cytochrome c in the IMS and 4 protons from the mitochondrial matrix. The polypeptide is Cytochrome c oxidase subunit 13, mitochondrial (COX13) (Saccharomyces cerevisiae (strain ATCC 204508 / S288c) (Baker's yeast)).